A 557-amino-acid polypeptide reads, in one-letter code: MGKSKSATKVVAEIKATKPLKKGKREPEDDIDTKVSLKKQKKDVIAAVQKEKAVKKVPKKVESSDDSDSESEEEEKAKKVPAKKAASSSDESSDDSSSDDEPAPKKAVAATNGTVAKKSKDDSSSSDDDSSDEEVAVTKKPAAAAKNGSVKAKKESSSEDDSSSEDEPAKKPAAKIAKPAAKDSSSSDDDSDEDSEDEKPATKKAAPAAAKAASSSDSSDEDSDEESEDEKPAQKKADTKASKKSSSDESSESEEDESEDEEETPKKKSSDVEMVDAEKSSAKQPKTPSTPAAGGSKTLFAANLSFNIERADVENFFKEAGEVVDVRFSTNRDDGSFRGFGHVEFASSEEAQKALEFHGRPLLGREIRLDIAQERGERGERPAFTPQSGNFRSGGDGGDEKKIFVKGFDASLSEDDIKNTLREHFSSCGEIKNVSVPIDRDTGNSKGIAYLEFSEGKEKALELNGSDMGGGFYLVVDEPRPRGDSSGGGGFGRGNGRFGSGGGRGRDGGRGRFGSGGGRGRDGGRGRFGSGGGRGSDRGRGRPSFTPQGKKTTFGDE.

3 disordered regions span residues 1-297 (MGKS…GGSK), 376-398 (GERG…GDGG), and 474-557 (LVVD…FGDE). The span at 49-63 (QKEKAVKKVPKKVES) shows a compositional bias: basic and acidic residues. Composition is skewed to acidic residues over residues 64–74 (SDDSDSESEEE), 91–101 (ESSDDSSSDDE), and 124–135 (SSSDDDSSDEEV). A compositionally biased stretch (low complexity) spans 174–184 (AKIAKPAAKDS). Positions 186–197 (SSDDDSDEDSED) are enriched in acidic residues. Residues 203–217 (KKAAPAAAKAASSSD) are compositionally biased toward low complexity. Acidic residues predominate over residues 218-229 (SSDEDSDEESED). Residues 230-247 (EKPAQKKADTKASKKSSS) show a composition bias toward basic and acidic residues. The span at 249 to 263 (ESSESEEDESEDEEE) shows a compositional bias: acidic residues. A compositionally biased stretch (basic and acidic residues) spans 264–281 (TPKKKSSDVEMVDAEKSS). Residues 297 to 374 (KTLFAANLSF…REIRLDIAQE (78 aa)) enclose the RRM 1 domain. The RRM 2 domain occupies 401-481 (KKIFVKGFDA…FYLVVDEPRP (81 aa)). The segment covering 485–503 (SSGGGGFGRGNGRFGSGGG) has biased composition (gly residues).

In terms of assembly, interacts with THAL in the nucleus. As to expression, expressed in roots, leaves, shoots and flowers.

The protein localises to the nucleus. It localises to the nucleolus. In terms of biological role, involved in pre-rRNA processing and ribosome assembly. Is associated with intranucleolar chromatin and pre-ribosomal particles and plays a role in controlling activation and repression of a specific subset of rRNA genes located in distinctive nucleolar organizer regions. Binds specifically rDNA chromatin and may be required to maintain rDNA chromatin structure, but is probably not required for the overall histone methylation status of 45S rRNA genes. Involved in leaf polarity establishment by functioning cooperatively with AS1 to repress abaxial genes ARF3, ARF4, KAN1, KAN2, YAB1 and YAB5, and the knox homeobox genes KNAT1, KNAT2, KNAT6, and STM to promote adaxial development in leaf primordia at shoot apical meristems at high temperatures. This Arabidopsis thaliana (Mouse-ear cress) protein is Nucleolin 1.